Here is a 778-residue protein sequence, read N- to C-terminus: Lon protease (778 aa).

One can recognise a Lon N-terminal domain in the interval 8-202 (LPLIPLRGLI…NVLTVIKDEL (195 aa)). 354 to 361 (GPPGVGKT) contributes to the ATP binding site. Residues 591–772 (EDKIGVVTGM…DTVLENALIG (182 aa)) enclose the Lon proteolytic domain. Catalysis depends on residues Ser678 and Lys721.

The protein belongs to the peptidase S16 family. Homohexamer. Organized in a ring with a central cavity.

Its subcellular location is the cytoplasm. The enzyme catalyses Hydrolysis of proteins in presence of ATP.. Its function is as follows. ATP-dependent serine protease that mediates the selective degradation of mutant and abnormal proteins as well as certain short-lived regulatory proteins. Required for cellular homeostasis and for survival from DNA damage and developmental changes induced by stress. Degrades polypeptides processively to yield small peptide fragments that are 5 to 10 amino acids long. Binds to DNA in a double-stranded, site-specific manner. The sequence is that of Lon protease from Clostridium acetobutylicum (strain ATCC 824 / DSM 792 / JCM 1419 / IAM 19013 / LMG 5710 / NBRC 13948 / NRRL B-527 / VKM B-1787 / 2291 / W).